The sequence spans 174 residues: Keratin-associated protein 1-5 (174 aa).

Residues 3-172 (CCQTSFCGYP…CCRPVCCCEP (170 aa)) form a 15 X 5 AA repeats of C-C-[QEPVRC]-[TPIVLE]-[SRHVP] region.

Belongs to the KRTAP type 1 family. Interacts with hair keratins. In terms of tissue distribution, expressed in the middle/upper portions of the hair cortex, in the region termed the keratogenous zone.

Its function is as follows. In the hair cortex, hair keratin intermediate filaments are embedded in an interfilamentous matrix, consisting of hair keratin-associated proteins (KRTAP), which are essential for the formation of a rigid and resistant hair shaft through their extensive disulfide bond cross-linking with abundant cysteine residues of hair keratins. The matrix proteins include the high-sulfur and high-glycine-tyrosine keratins. This chain is Keratin-associated protein 1-5 (KRTAP1-5), found in Homo sapiens (Human).